Here is a 203-residue protein sequence, read N- to C-terminus: Molybdenum cofactor guanylyltransferase (203 aa).

GTP contacts are provided by residues 12–14 (LAG), Lys25, Asn53, Asp71, and Asp101. Position 101 (Asp101) interacts with Mg(2+).

The protein belongs to the MobA family. Monomer. Requires Mg(2+) as cofactor.

The protein resides in the cytoplasm. It carries out the reaction Mo-molybdopterin + GTP + H(+) = Mo-molybdopterin guanine dinucleotide + diphosphate. Functionally, transfers a GMP moiety from GTP to Mo-molybdopterin (Mo-MPT) cofactor (Moco or molybdenum cofactor) to form Mo-molybdopterin guanine dinucleotide (Mo-MGD) cofactor. The chain is Molybdenum cofactor guanylyltransferase from Methylibium petroleiphilum (strain ATCC BAA-1232 / LMG 22953 / PM1).